A 281-amino-acid polypeptide reads, in one-letter code: MKQFSAKYALILLATAGQALAASTQGISEDLYNRLVEMATISQAAYADLCNIPSTIIKGEKIYNAQTDINGWILRDDTSKEIITVFRGTGSDTNLQLDTNYTLTPFDTLPQCNDCEVHGGYYIGWISVQDQVESLVKQQASQYPDYALTVTGHSLGASMAALTAAQLSATYDNVRLYTFGEPRSGNQAFASYMNDAFQVSSPETTQYFRVTHSNDGIPNLPPADEGYAHGGVEYWSVDPYSAQNTFVCTGDEVQCCEAQGGQGVNDAHTTYFGMTSGACTW.

Positions 1 to 21 (MKQFSAKYALILLATAGQALA) are cleaved as a signal peptide. 3 disulfide bridges follow: Cys-50-Cys-279, Cys-112-Cys-115, and Cys-248-Cys-255. Position 98 (Asp-98) interacts with substrate. N-linked (GlcNAc...) asparagine glycosylation is present at Asn-100. Tyr-101 contributes to the substrate binding site. Catalysis depends on Ser-154, which acts as the Nucleophile. The active-site Charge relay system is the Asp-215. Residue His-268 participates in substrate binding. His-268 acts as the Charge relay system in catalysis.

In terms of processing, glycosylated.

The protein localises to the secreted. The catalysed reaction is feruloyl-polysaccharide + H2O = ferulate + polysaccharide.. Its activity is regulated as follows. Inhibited by the specific serine esterase inhibitor diisopropylfluorophosphate. Functionally, involved in degradation of plant cell walls. Hydrolyzes the feruloyl-arabinose ester bond in arabinoxylans, and the feruloyl-galactose ester bond in pectin. Binds to cellulose. This Aspergillus niger protein is Feruloyl esterase A (faeA).